The sequence spans 145 residues: 3-hydroxyacyl-[acyl-carrier-protein] dehydratase FabZ (145 aa).

The active site involves His51.

Belongs to the thioester dehydratase family. FabZ subfamily.

Its subcellular location is the cytoplasm. It catalyses the reaction a (3R)-hydroxyacyl-[ACP] = a (2E)-enoyl-[ACP] + H2O. In terms of biological role, involved in unsaturated fatty acids biosynthesis. Catalyzes the dehydration of short chain beta-hydroxyacyl-ACPs and long chain saturated and unsaturated beta-hydroxyacyl-ACPs. This chain is 3-hydroxyacyl-[acyl-carrier-protein] dehydratase FabZ, found in Staphylococcus epidermidis (strain ATCC 35984 / DSM 28319 / BCRC 17069 / CCUG 31568 / BM 3577 / RP62A).